Here is a 238-residue protein sequence, read N- to C-terminus: Ribonuclease PH (238 aa).

Residues Arg-86 and 124–126 (GTR) contribute to the phosphate site.

The protein belongs to the RNase PH family. In terms of assembly, homohexameric ring arranged as a trimer of dimers.

The catalysed reaction is tRNA(n+1) + phosphate = tRNA(n) + a ribonucleoside 5'-diphosphate. In terms of biological role, phosphorolytic 3'-5' exoribonuclease that plays an important role in tRNA 3'-end maturation. Removes nucleotide residues following the 3'-CCA terminus of tRNAs; can also add nucleotides to the ends of RNA molecules by using nucleoside diphosphates as substrates, but this may not be physiologically important. Probably plays a role in initiation of 16S rRNA degradation (leading to ribosome degradation) during starvation. The chain is Ribonuclease PH from Chelativorans sp. (strain BNC1).